The following is a 375-amino-acid chain: MSFYQPSLSLYDVLNALSNQTGQRGQQGYPRQPQRPQRYHPHYGQVHVGGHHPRHHPLYSRYNGVPNTYYYQFPGQAYYYSPEYGYDDEDGEEEDQDEDMVGDSGTTRQEDGGEDSNSRRYPSYYHCNTARNNRTNQQANSLNDLLTALIGVPPYEGTEPEIEANTEQEGEKGEEKDKKDKSEAPKEEAGETNKEKPLNQLEESSRPPLAKKSSSFAHLQAPSPIPDPLQVSKPETRMDLPFSPEVNVYDTEDTYVVVLALPGANSRAFHIDYHPSSHEMLIKGKIEDRVGIDEKFLKITELKYGAFERTVKFPVLPRIKDEEIKATYNNGLLQIKVPKIVNDTEKPKPKKRIAIEEIPDEELEFEENPNPTVEN.

Disordered stretches follow at residues 21–59 (TGQR…HPLY), 81–127 (SPEY…YYHC), 154–238 (PYEG…ETRM), and 347–375 (PKPK…TVEN). A compositionally biased stretch (low complexity) spans 22–48 (GQRGQQGYPRQPQRPQRYHPHYGQVHV). A compositionally biased stretch (basic residues) spans 49–58 (GGHHPRHHPL). 2 stretches are compositionally biased toward acidic residues: residues 85-101 (GYDD…EDMV) and 158-168 (TEPEIEANTEQ). The segment covering 169–197 (EGEKGEEKDKKDKSEAPKEEAGETNKEKP) has biased composition (basic and acidic residues). Phosphoserine occurs at positions 182, 213, 214, 215, and 223. The sHSP domain maps to 237-356 (RMDLPFSPEV…PKPKKRIAIE (120 aa)). Over residues 357–367 (EIPDEELEFEE) the composition is skewed to acidic residues.

Belongs to the small heat shock protein (HSP20) family. Forms oligomeric complexes. Interacts with itself.

In Saccharomyces cerevisiae (strain ATCC 204508 / S288c) (Baker's yeast), this protein is Heat shock protein 42 (HSP42).